The chain runs to 82 residues: MVIIRLARGGAKKTPFYSVVVADSRNRRDGRFIERVGFYNPLAKEGQEGLRLNNERIAHWRDNGAQLSDTVARLVKQAQKSA.

It belongs to the bacterial ribosomal protein bS16 family.

The chain is Small ribosomal subunit protein bS16 from Methylobacillus flagellatus (strain ATCC 51484 / DSM 6875 / VKM B-1610 / KT).